Here is a 571-residue protein sequence, read N- to C-terminus: Phototropic-responsive NPH3 family protein NPY1 (571 aa).

The 69-residue stretch at 29-97 folds into the BTB domain; sequence SDVTIHVGEV…CYGMTVTLNA (69 aa). An NPH3 domain is found at 210 to 468; the sequence is DWWVEDVCEL…VQVLYFEQLR (259 aa). Tyrosine 409 carries the phosphotyrosine modification. The interval 475-571 is disordered; that stretch reads ASVAASSHSP…SSRRRRHSIS (97 aa). Over residues 484 to 504 the composition is skewed to basic and acidic residues; it reads PVEKTEENKGEEATKKVELSK. Residues 540-562 show a composition bias toward low complexity; the sequence is SNKSSEVSSGSSQSPPAKSSSSS.

This sequence belongs to the NPH3 family. In terms of assembly, component of a complex made of PINs (e.g. PIN1 and PIN2), MAB4/MELs (e.g. NPY1/MAB4 and NPY5/MEL1) and AGC kinases (e.g. D6PK and PID) at the plasma membrane. Binds directly to PIN2 and PID. In terms of tissue distribution, accumulates in organ primordia such as cotyledons, leaves and floral organs. Expressed mainly in the apical regions of embryos including cotyledon tips and the apical meristem. Induced by the transcription factor ARF5/MP at the periphery of inflorescence meristems. Highly expressed in primary root tips and radicles.

The protein localises to the late endosome. The protein resides in the cell membrane. It is found in the cytoplasm. Its subcellular location is the cytosol. It participates in protein modification; protein ubiquitination. May act as a substrate-specific adapter of an E3 ubiquitin-protein ligase complex (CUL3-RBX1-BTB) which mediates the ubiquitination and subsequent proteasomal degradation of target proteins. Coregulates with PID the auxin-mediated plant organogenesis. Regulates basipetal PIN proteins (e.g. PIN1) polarization to establish inward auxin transport from the L1 surface of incipient organ primordia; this process is essential for the progression of flower organs development. Recruited to the plasma membrane by PINs (e.g. PIN1 and PIN2) and, in concert with AGC kinases-mediated (e.g. D6PK and PID) PINs phosphorylation, maintains their cell polarity (apical or basal) through limiting lateral diffusion-based escape. Induces auxin response in inner cell layers through a shift in PIN1 localization. Influences cotyledon development by regulating auxin distribution mainly in the protodermal cell layer. May play an essential role in root gravitropic responses. This is Phototropic-responsive NPH3 family protein NPY1 from Arabidopsis thaliana (Mouse-ear cress).